A 199-amino-acid polypeptide reads, in one-letter code: GTP cyclohydrolase 1 (199 aa).

Positions 89, 92, and 161 each coordinate Zn(2+).

This sequence belongs to the GTP cyclohydrolase I family. As to quaternary structure, homomer.

It carries out the reaction GTP + H2O = 7,8-dihydroneopterin 3'-triphosphate + formate + H(+). It participates in cofactor biosynthesis; 7,8-dihydroneopterin triphosphate biosynthesis; 7,8-dihydroneopterin triphosphate from GTP: step 1/1. The chain is GTP cyclohydrolase 1 from Bifidobacterium longum (strain DJO10A).